The primary structure comprises 209 residues: Thiamine-phosphate synthase (209 aa).

4-amino-2-methyl-5-(diphosphooxymethyl)pyrimidine-binding positions include 39 to 43 and Asn71; that span reads QLREK. 2 residues coordinate Mg(2+): Asp72 and Asp91. Ser110 is a binding site for 4-amino-2-methyl-5-(diphosphooxymethyl)pyrimidine. A 2-[(2R,5Z)-2-carboxy-4-methylthiazol-5(2H)-ylidene]ethyl phosphate-binding site is contributed by 136-138; that stretch reads TGT. Lys139 contacts 4-amino-2-methyl-5-(diphosphooxymethyl)pyrimidine. Residues Gly166 and 186 to 187 each bind 2-[(2R,5Z)-2-carboxy-4-methylthiazol-5(2H)-ylidene]ethyl phosphate; that span reads VS.

The protein belongs to the thiamine-phosphate synthase family. Requires Mg(2+) as cofactor.

The catalysed reaction is 2-[(2R,5Z)-2-carboxy-4-methylthiazol-5(2H)-ylidene]ethyl phosphate + 4-amino-2-methyl-5-(diphosphooxymethyl)pyrimidine + 2 H(+) = thiamine phosphate + CO2 + diphosphate. The enzyme catalyses 2-(2-carboxy-4-methylthiazol-5-yl)ethyl phosphate + 4-amino-2-methyl-5-(diphosphooxymethyl)pyrimidine + 2 H(+) = thiamine phosphate + CO2 + diphosphate. It carries out the reaction 4-methyl-5-(2-phosphooxyethyl)-thiazole + 4-amino-2-methyl-5-(diphosphooxymethyl)pyrimidine + H(+) = thiamine phosphate + diphosphate. Its pathway is cofactor biosynthesis; thiamine diphosphate biosynthesis; thiamine phosphate from 4-amino-2-methyl-5-diphosphomethylpyrimidine and 4-methyl-5-(2-phosphoethyl)-thiazole: step 1/1. Condenses 4-methyl-5-(beta-hydroxyethyl)thiazole monophosphate (THZ-P) and 2-methyl-4-amino-5-hydroxymethyl pyrimidine pyrophosphate (HMP-PP) to form thiamine monophosphate (TMP). The protein is Thiamine-phosphate synthase of Clostridium beijerinckii (strain ATCC 51743 / NCIMB 8052) (Clostridium acetobutylicum).